A 138-amino-acid polypeptide reads, in one-letter code: Putative pre-16S rRNA nuclease (138 aa).

This sequence belongs to the YqgF nuclease family.

Its subcellular location is the cytoplasm. In terms of biological role, could be a nuclease involved in processing of the 5'-end of pre-16S rRNA. This is Putative pre-16S rRNA nuclease from Listeria innocua serovar 6a (strain ATCC BAA-680 / CLIP 11262).